A 908-amino-acid polypeptide reads, in one-letter code: Glutamate receptor ionotropic, kainate 2 (908 aa).

An N-terminal signal peptide occupies residues 1–31 (MKIIFPILSNPVFRRTVKLLLCLLWIGYSQG). Residues 32–561 (TTHVLRFGGI…VFSFLNPLSP (530 aa)) are Extracellular-facing. N-linked (GlcNAc...) asparagine glycans are attached at residues Asn67, Asn73, Asn275, Asn378, Asn412, Asn423, and Asn430. Cys96 and Cys347 are oxidised to a cystine. L-glutamate is bound by residues Pro516, Ala518, and Arg523. Residue Asn546 is glycosylated (N-linked (GlcNAc...) asparagine). Residues 562–582 (DIWMYILLAYLGVSCVLFVIA) form a helical membrane-spanning segment. Over 583–635 (RFSPYEWYNPHPCNPDSDVVENNFTLLNSFWFGVGALMQQGSELMPKALSTRI) the chain is Cytoplasmic. A helical membrane pass occupies residues 636–656 (VGGIWWFFTLIIISSYTANLA). Over 657 to 819 (AFLTVERMES…KEASALGVQN (163 aa)) the chain is Extracellular. The L-glutamate site is built by Ala689, Thr690, and Glu738. Cys750 and Cys804 are oxidised to a cystine. Asn751 carries an N-linked (GlcNAc...) asparagine glycan. Residues 820–840 (IGGIFIVLAAGLVLSVFVAVG) form a helical membrane-spanning segment. The Cytoplasmic portion of the chain corresponds to 841-908 (EFLYKSKKNA…RRLPGKETMA (68 aa)). Ser846 and Ser868 each carry phosphoserine; by PKC. Lys886 is covalently cross-linked (Glycyl lysine isopeptide (Lys-Gly) (interchain with G-Cter in SUMO1)).

The protein belongs to the glutamate-gated ion channel (TC 1.A.10.1) family. GRIK2 subfamily. In terms of assembly, homotetramer and heterotetramer with GRIK5. Tetramers may be formed by the dimerization of dimers. Assembles into a kainate-gated homomeric channel that does not bind AMPA. Can form functional heteromeric receptors with GRIK5. Can form functional heteromeric receptors with GRIK3 and GRIK4. Interacts with DLG4. Interacts with NETO2. Interacts (via C-terminus) with KLHL17 (via kelch repeats); the interaction targets GRIK2 for degradation via ubiquitin-proteasome pathway. Sumoylation mediates kainate receptor-mediated endocytosis and regulates synaptic transmission. Sumoylation is enhanced by PIAS3 and desumoylated by SENP1. In terms of processing, ubiquitinated. Ubiquitination regulates the GRIK2 levels at the synapse by leading kainate receptor degradation through proteasome. Post-translationally, phosphorylated by PKC at Ser-868 upon agonist activation, this directly enhance sumoylation. Expression is higher in cerebellum than in cerebral cortex.

It localises to the cell membrane. It is found in the postsynaptic cell membrane. It catalyses the reaction Ca(2+)(in) = Ca(2+)(out). The catalysed reaction is Na(+)(in) = Na(+)(out). Its activity is regulated as follows. Cold receptor activity activated by temperatures between 10-19 degrees Celsius. Ionotropic glutamate receptor that functions as a cation permeable ligand-gated ion channel, gated by L-glutamate and the glutamatergic agonist kainic acid. L-glutamate acts as an excitatory neurotransmitter at many synapses in the central nervous system. Binding of the excitatory neurotransmitter L-glutamate induces a conformation change, leading to the opening of the cation channel, and thereby converts the chemical signal to an electrical impulse. The receptor then desensitizes rapidly and enters a transient inactive state, characterized by the presence of bound agonist. Modulates cell surface expression of NETO2. In association with GRIK3, involved in presynaptic facilitation of glutamate release at hippocampal mossy fiber synapses. In terms of biological role, independent of its ionotropic glutamate receptor activity, acts as a thermoreceptor conferring sensitivity to cold temperatures. Functions in dorsal root ganglion neurons. The chain is Glutamate receptor ionotropic, kainate 2 (GRIK2) from Homo sapiens (Human).